The chain runs to 203 residues: Small ribosomal subunit protein uS4 (203 aa).

The 62-residue stretch at 93–154 (RRFDNVVYRC…KSRNLDAVAD (62 aa)) folds into the S4 RNA-binding domain.

Belongs to the universal ribosomal protein uS4 family. As to quaternary structure, part of the 30S ribosomal subunit. Contacts protein S5. The interaction surface between S4 and S5 is involved in control of translational fidelity.

Its function is as follows. One of the primary rRNA binding proteins, it binds directly to 16S rRNA where it nucleates assembly of the body of the 30S subunit. Functionally, with S5 and S12 plays an important role in translational accuracy. The chain is Small ribosomal subunit protein uS4 from Chlorobaculum parvum (strain DSM 263 / NCIMB 8327) (Chlorobium vibrioforme subsp. thiosulfatophilum).